The following is a 317-amino-acid chain: Lipoyl synthase (317 aa).

The tract at residues 1–28 (MDSQPQSKKAARGADKTARNPIPIIPAP) is disordered. 7 residues coordinate [4Fe-4S] cluster: cysteine 64, cysteine 69, cysteine 75, cysteine 90, cysteine 94, cysteine 97, and serine 304. The Radical SAM core domain occupies 76–293 (FGGGTATFMI…QRDGMAMGFR (218 aa)).

The protein belongs to the radical SAM superfamily. Lipoyl synthase family. [4Fe-4S] cluster is required as a cofactor.

It localises to the cytoplasm. The enzyme catalyses [[Fe-S] cluster scaffold protein carrying a second [4Fe-4S](2+) cluster] + N(6)-octanoyl-L-lysyl-[protein] + 2 oxidized [2Fe-2S]-[ferredoxin] + 2 S-adenosyl-L-methionine + 4 H(+) = [[Fe-S] cluster scaffold protein] + N(6)-[(R)-dihydrolipoyl]-L-lysyl-[protein] + 4 Fe(3+) + 2 hydrogen sulfide + 2 5'-deoxyadenosine + 2 L-methionine + 2 reduced [2Fe-2S]-[ferredoxin]. The protein operates within protein modification; protein lipoylation via endogenous pathway; protein N(6)-(lipoyl)lysine from octanoyl-[acyl-carrier-protein]: step 2/2. Catalyzes the radical-mediated insertion of two sulfur atoms into the C-6 and C-8 positions of the octanoyl moiety bound to the lipoyl domains of lipoate-dependent enzymes, thereby converting the octanoylated domains into lipoylated derivatives. This chain is Lipoyl synthase, found in Acidithiobacillus ferrooxidans (strain ATCC 23270 / DSM 14882 / CIP 104768 / NCIMB 8455) (Ferrobacillus ferrooxidans (strain ATCC 23270)).